Reading from the N-terminus, the 438-residue chain is 23S rRNA (uracil(1939)-C(5))-methyltransferase RlmD (438 aa).

In terms of domain architecture, TRAM spans 10 to 68 (KTKNVQTITADILDLDYQGLGVAKINGKTWFIENALPHEKVECRILEDKRQYGHAIVKK). [4Fe-4S] cluster contacts are provided by Cys-81, Cys-87, Cys-90, and Cys-168. Residues Gln-271, Phe-300, Asn-305, Glu-321, Asp-348, and Asp-369 each contribute to the S-adenosyl-L-methionine site. The Nucleophile role is filled by Cys-395.

It belongs to the class I-like SAM-binding methyltransferase superfamily. RNA M5U methyltransferase family. RlmD subfamily.

The catalysed reaction is uridine(1939) in 23S rRNA + S-adenosyl-L-methionine = 5-methyluridine(1939) in 23S rRNA + S-adenosyl-L-homocysteine + H(+). In terms of biological role, catalyzes the formation of 5-methyl-uridine at position 1939 (m5U1939) in 23S rRNA. This chain is 23S rRNA (uracil(1939)-C(5))-methyltransferase RlmD, found in Haemophilus influenzae (strain ATCC 51907 / DSM 11121 / KW20 / Rd).